The primary structure comprises 220 residues: Adenylate kinase (220 aa).

Position 10-15 (G10–T15) interacts with ATP. Residues S30 to V59 form an NMP region. AMP contacts are provided by residues T31, R36, K57–V59, G85–R88, and Q92. Positions G122–D159 are LID. ATP contacts are provided by residues R123 and T132 to Y133. Residues R156 and R167 each contribute to the AMP site. G206 lines the ATP pocket.

Belongs to the adenylate kinase family. In terms of assembly, monomer.

It localises to the cytoplasm. The enzyme catalyses AMP + ATP = 2 ADP. Its pathway is purine metabolism; AMP biosynthesis via salvage pathway; AMP from ADP: step 1/1. Catalyzes the reversible transfer of the terminal phosphate group between ATP and AMP. Plays an important role in cellular energy homeostasis and in adenine nucleotide metabolism. This chain is Adenylate kinase, found in Burkholderia mallei (strain NCTC 10247).